The following is a 380-amino-acid chain: Phthiodiolone/phenolphthiodiolone dimycocerosates ketoreductase (380 aa).

This sequence belongs to the mer family. Phthiodiolone/phenolphthiodiolone dimycocerosates ketoreductase subfamily.

Catalyzes the reduction of the keto moiety of phthiodiolone dimycocerosates (DIM B) and glycosylated phenolphthiodiolone dimycocerosates to form the intermediate compounds phthiotriol and glycosylated phenolphthiotriol dimycocerosates during phthiocerol dimycocerosates (DIM A) and glycosylated phenolphthiocerol dimycocerosates (PGL) biosynthesis. This is Phthiodiolone/phenolphthiodiolone dimycocerosates ketoreductase from Mycobacterium sp. (strain JLS).